Consider the following 62-residue polypeptide: Keratin-associated protein 6-2 (62 aa).

It belongs to the KRTAP type 6 family. Interacts with hair keratins.

In terms of biological role, in the hair cortex, hair keratin intermediate filaments are embedded in an interfilamentous matrix, consisting of hair keratin-associated proteins (KRTAP), which are essential for the formation of a rigid and resistant hair shaft through their extensive disulfide bond cross-linking with abundant cysteine residues of hair keratins. The matrix proteins include the high-sulfur and high-glycine-tyrosine keratins. In Homo sapiens (Human), this protein is Keratin-associated protein 6-2 (KRTAP6-2).